The following is a 1167-amino-acid chain: DNA-directed RNA polymerase subunit beta (1167 aa).

It belongs to the RNA polymerase beta chain family. As to quaternary structure, the RNAP catalytic core consists of 2 alpha, 1 beta, 1 beta' and 1 omega subunit. When a sigma factor is associated with the core the holoenzyme is formed, which can initiate transcription.

It catalyses the reaction RNA(n) + a ribonucleoside 5'-triphosphate = RNA(n+1) + diphosphate. In terms of biological role, DNA-dependent RNA polymerase catalyzes the transcription of DNA into RNA using the four ribonucleoside triphosphates as substrates. The polypeptide is DNA-directed RNA polymerase subunit beta (Treponema denticola (strain ATCC 35405 / DSM 14222 / CIP 103919 / JCM 8153 / KCTC 15104)).